The following is a 149-amino-acid chain: MKKRVVTAGTFDILHPGHYEILKFAKSLGDELIVIVARDETVKKLKGRKPIIPEEQRREMVEALKPVDKAILGSLKNKLEPILELKPDIIVLGPDQTTFDEETLKKELAKYNLYPEIVRFRGYKKCPFHSSFDIVKEIIRRFCNKEIKI.

ATP-binding positions include 10 to 11 (TF), 15 to 18 (HPGH), Asp95, and Tyr123.

This sequence belongs to the archaeal FAD synthase family. Homodimer. Co(2+) is required as a cofactor.

It carries out the reaction FMN + ATP + H(+) = FAD + diphosphate. It functions in the pathway cofactor biosynthesis; FAD biosynthesis; FAD from FMN: step 1/1. Its activity is regulated as follows. Is inhibited by the product PPi. Catalyzes the transfer of the AMP portion of ATP to flavin mononucleotide (FMN) to produce flavin adenine dinucleotide (FAD) coenzyme. To a lesser extent, is also able to utilize other nucleotides such as CTP and GTP as substrates, producing the modified coenzymes, flavin cytosine dinucleotide (FCD) and flavin guanine dinucleotide (FGD), respectively. Does not catalyze the reverse reaction to produce FMN and ATP from FAD and PPi. Does not function as a glycerol-3-phosphate cytidylyltransferase, as previously annotated in the complete genome. The chain is FAD synthase (ribL) from Methanocaldococcus jannaschii (strain ATCC 43067 / DSM 2661 / JAL-1 / JCM 10045 / NBRC 100440) (Methanococcus jannaschii).